The chain runs to 190 residues: Sec-independent protein translocase protein TatB (190 aa).

A helical transmembrane segment spans residues 2–22 (LPDIGGTELLVIAAVALIVVG). The disordered stretch occupies residues 130–190 (IVSKPARKPP…KASTNSDITS (61 aa)). Residues 134 to 144 (PARKPPAKKAA) show a composition bias toward basic residues. Over residues 145–163 (AKPAAKAELVSKPKASAKA) the composition is skewed to low complexity.

The protein belongs to the TatB family. The Tat system comprises two distinct complexes: a TatABC complex, containing multiple copies of TatA, TatB and TatC subunits, and a separate TatA complex, containing only TatA subunits. Substrates initially bind to the TatABC complex, which probably triggers association of the separate TatA complex to form the active translocon.

The protein localises to the cell inner membrane. Its function is as follows. Part of the twin-arginine translocation (Tat) system that transports large folded proteins containing a characteristic twin-arginine motif in their signal peptide across membranes. Together with TatC, TatB is part of a receptor directly interacting with Tat signal peptides. TatB may form an oligomeric binding site that transiently accommodates folded Tat precursor proteins before their translocation. The chain is Sec-independent protein translocase protein TatB from Caulobacter sp. (strain K31).